We begin with the raw amino-acid sequence, 610 residues long: Ubiquilin-like protein (610 aa).

Positions 31–105 (IRVIVKTPGN…IHVVIKSKHG (75 aa)) constitute a Ubiquitin-like domain. Residues 562–607 (QAPEVRFSKEMECLQAMGFVNYNANLQALIATDGDTNAAIYKLKSS) form the UBA domain.

This Mus musculus (Mouse) protein is Ubiquilin-like protein (Ubqlnl).